Consider the following 446-residue polypeptide: Maltoporin (446 aa).

The signal sequence occupies residues 1–25 (MMITLRKLPLAVAVAAGVMSAQAMA).

Belongs to the porin LamB (TC 1.B.3) family. As to quaternary structure, homotrimer formed of three 18-stranded antiparallel beta-barrels, containing three independent channels.

Its subcellular location is the cell outer membrane. The catalysed reaction is beta-maltose(in) = beta-maltose(out). In terms of biological role, involved in the transport of maltose and maltodextrins. In Escherichia coli O157:H7 (strain EC4115 / EHEC), this protein is Maltoporin.